The chain runs to 187 residues: UPF0301 protein BCI_0481 (187 aa).

Belongs to the UPF0301 (AlgH) family.

This chain is UPF0301 protein BCI_0481, found in Baumannia cicadellinicola subsp. Homalodisca coagulata.